Consider the following 235-residue polypeptide: MQLLTLNPAAISRTPPQAIDPSSSSSLLLPFPQILSSQRALGLVARPCNPLRRGLSRFLSSRQLFRRSKVVKAVATPDPILEVPLTEENVESVLDEIRPYLMSDGGNVALHEIDGNIVRVKLQGACGSCPSSTMTMKMGIERRLMEKIPEIVAVEALPDEETGLELNEENIEKVLEEIRPYLIGTADGSLDLVEIEDPIVKIRITGPAAGVMTVRVAVTQKLREKIPSIAAVQLI.

The N-terminal 16 residues, 1 to 16, are a transit peptide targeting the chloroplast; that stretch reads MQLLTLNPAAISRTPP.

It belongs to the NifU family. As to quaternary structure, homodimer; disulfide-linked. It depends on [2Fe-2S] cluster as a cofactor. In terms of tissue distribution, predominantly expressed in leaves and floral stalks. Ubiquitous (at protein level).

The protein localises to the plastid. It localises to the chloroplast stroma. In terms of biological role, molecular scaffold for [Fe-S] cluster assembly of chloroplastic iron-sulfur proteins. Required for biogenesis of ferredoxin, a major photosynthetic electron carrier containing [2Fe-2S] cluster. Required for the assembly of photosystem I complex. The protein is NifU-like protein 2, chloroplastic (NIFU2) of Arabidopsis thaliana (Mouse-ear cress).